A 333-amino-acid chain; its full sequence is NADH-quinone oxidoreductase subunit H (333 aa).

8 helical membrane-spanning segments follow: residues 15 to 35 (LVIFFGLGLALLFAVLAFVTY), 88 to 108 (FILAPIIAFAPAFMVLATLPF), 117 to 137 (IGVGLLYYIAVSGLTTIGVVA), 159 to 179 (ISYEIPLVVSVLGVVLLTGSL), 191 to 211 (VWYIFIQPIAFIVFFIAAVAE), 250 to 270 (LFAMAALTTILFLGGWHPVMF), 273 to 293 (FIPGAVWFALKFSIVVFVLIW), and 313 to 333 (VLFPVALLNIFVTALIQELFF).

Belongs to the complex I subunit 1 family. In terms of assembly, NDH-1 is composed of 14 different subunits. Subunits NuoA, H, J, K, L, M, N constitute the membrane sector of the complex.

The protein localises to the cell membrane. The enzyme catalyses a quinone + NADH + 5 H(+)(in) = a quinol + NAD(+) + 4 H(+)(out). Functionally, NDH-1 shuttles electrons from NADH, via FMN and iron-sulfur (Fe-S) centers, to quinones in the respiratory chain. The immediate electron acceptor for the enzyme in this species is believed to be ubiquinone. Couples the redox reaction to proton translocation (for every two electrons transferred, four hydrogen ions are translocated across the cytoplasmic membrane), and thus conserves the redox energy in a proton gradient. This subunit may bind ubiquinone. The protein is NADH-quinone oxidoreductase subunit H of Geobacillus sp. (strain WCH70).